The following is an 84-amino-acid chain: Cell division topological specificity factor (84 aa).

This sequence belongs to the MinE family.

Functionally, prevents the cell division inhibition by proteins MinC and MinD at internal division sites while permitting inhibition at polar sites. This ensures cell division at the proper site by restricting the formation of a division septum at the midpoint of the long axis of the cell. The polypeptide is Cell division topological specificity factor (Burkholderia multivorans (strain ATCC 17616 / 249)).